Here is a 145-residue protein sequence, read N- to C-terminus: MKLMGLDVGSRTVGVAVSDALGWTAQGVEIIRINEDEEQFGLDRVGELIASHDVQGFVVGLPKNMNNSLGPRAEASKRYGDMLTARFNLPVDFEDERLTTVEAERMLVEQADTSRRKRKQVIDKLAAGLILQNYLDRHGKLTREK.

This sequence belongs to the YqgF nuclease family.

The protein resides in the cytoplasm. Functionally, could be a nuclease involved in processing of the 5'-end of pre-16S rRNA. The polypeptide is Putative pre-16S rRNA nuclease (Levilactobacillus brevis (strain ATCC 367 / BCRC 12310 / CIP 105137 / JCM 1170 / LMG 11437 / NCIMB 947 / NCTC 947) (Lactobacillus brevis)).